The chain runs to 704 residues: Elongation factor G (704 aa).

Positions 8–291 constitute a tr-type G domain; the sequence is DKVRNIGIMA…AVVDYLASPL (284 aa). GTP-binding positions include 17-24, 90-94, and 144-147; these read AHIDAGKT, DTPGH, and NKMD.

The protein belongs to the TRAFAC class translation factor GTPase superfamily. Classic translation factor GTPase family. EF-G/EF-2 subfamily.

It localises to the cytoplasm. Functionally, catalyzes the GTP-dependent ribosomal translocation step during translation elongation. During this step, the ribosome changes from the pre-translocational (PRE) to the post-translocational (POST) state as the newly formed A-site-bound peptidyl-tRNA and P-site-bound deacylated tRNA move to the P and E sites, respectively. Catalyzes the coordinated movement of the two tRNA molecules, the mRNA and conformational changes in the ribosome. The protein is Elongation factor G of Chlorobium phaeovibrioides (strain DSM 265 / 1930) (Prosthecochloris vibrioformis (strain DSM 265)).